The following is a 453-amino-acid chain: tRNA modification GTPase MnmE (453 aa).

Residues Arg22, Glu79, and Lys119 each contribute to the (6S)-5-formyl-5,6,7,8-tetrahydrofolate site. One can recognise a TrmE-type G domain in the interval 215–376 (GMKVVIAGRP…LKQHLKSLMG (162 aa)). Asn225 is a K(+) binding site. Residues 225 to 230 (NAGKSS), 244 to 250 (TEIAGTT), 269 to 272 (DTAG), and 334 to 337 (NKAD) each bind GTP. Ser229 is a binding site for Mg(2+). Residues Thr244, Ile246, and Thr249 each contribute to the K(+) site. A Mg(2+)-binding site is contributed by Thr250. Position 453 (Lys453) interacts with (6S)-5-formyl-5,6,7,8-tetrahydrofolate.

It belongs to the TRAFAC class TrmE-Era-EngA-EngB-Septin-like GTPase superfamily. TrmE GTPase family. As to quaternary structure, homodimer. Heterotetramer of two MnmE and two MnmG subunits. Requires K(+) as cofactor.

The protein localises to the cytoplasm. In terms of biological role, exhibits a very high intrinsic GTPase hydrolysis rate. Involved in the addition of a carboxymethylaminomethyl (cmnm) group at the wobble position (U34) of certain tRNAs, forming tRNA-cmnm(5)s(2)U34. This chain is tRNA modification GTPase MnmE, found in Shewanella baltica (strain OS195).